Reading from the N-terminus, the 608-residue chain is uncharacterized protein (608 aa).

Residues 4 to 24 (LIFMALLMSLLFIGTVFGYGD) form a helical membrane-spanning segment.

To M.jannaschii MJ1394 and A.fulgidus AF2028.

It localises to the membrane. This is an uncharacterized protein from Methanocaldococcus jannaschii (strain ATCC 43067 / DSM 2661 / JAL-1 / JCM 10045 / NBRC 100440) (Methanococcus jannaschii).